The sequence spans 254 residues: Adenosylcobinamide-GDP ribazoletransferase (254 aa).

A run of 7 helical transmembrane segments spans residues 29–49 (LFWF…LGYF), 50–70 (TSLL…GIAL), 98–118 (IMKD…MMLL), 121–141 (IAIL…GVLL), 170–190 (AGVV…FPLL), 198–218 (LYAV…TGLL), and 230–250 (VLGA…ALSA).

This sequence belongs to the CobS family. The cofactor is Mg(2+).

It localises to the cell inner membrane. The catalysed reaction is alpha-ribazole + adenosylcob(III)inamide-GDP = adenosylcob(III)alamin + GMP + H(+). It carries out the reaction alpha-ribazole 5'-phosphate + adenosylcob(III)inamide-GDP = adenosylcob(III)alamin 5'-phosphate + GMP + H(+). The protein operates within cofactor biosynthesis; adenosylcobalamin biosynthesis; adenosylcobalamin from cob(II)yrinate a,c-diamide: step 7/7. Its function is as follows. Joins adenosylcobinamide-GDP and alpha-ribazole to generate adenosylcobalamin (Ado-cobalamin). Also synthesizes adenosylcobalamin 5'-phosphate from adenosylcobinamide-GDP and alpha-ribazole 5'-phosphate. The polypeptide is Adenosylcobinamide-GDP ribazoletransferase (Pelodictyon phaeoclathratiforme (strain DSM 5477 / BU-1)).